The chain runs to 2286 residues: Non-reducing polyketide synthase fsr1 (2286 aa).

The tract at residues 7 to 342 (LYLFGDQTFD…IYTALKKTSL (336 aa)) is N-terminal acylcarrier protein transacylase domain (SAT). Residues 368–805 (KPKLAIVAMS…GGNSALLIQD (438 aa)) enclose the Ketosynthase family 3 (KS3) domain. Residues C540, H675, and H722 each act as for beta-ketoacyl synthase activity in the active site. The tract at residues 905–1195 (VFTFTGQGAQ…GMVKPTLGQQ (291 aa)) is acyl/malonyl transferases. S996 (for acyl/malonyl transferase activity) is an active-site residue. Residues 1285-1417 (HSVVEESGDS…CVVLFKDRSH (133 aa)) form an N-terminal hotdog fold region. In terms of domain architecture, PKS/mFAS DH spans 1285 to 1591 (HSVVEESGDS…IQGVPRRVLK (307 aa)). A product template (PT) domainn region spans residues 1296–1588 (KTGIVVEADI…QIAIQGVPRR (293 aa)). Catalysis depends on H1317, which acts as the Proton acceptor; for dehydratase activity. Residues 1444 to 1591 (SARFNRPMAY…IQGVPRRVLK (148 aa)) form a C-terminal hotdog fold region. The Proton donor; for dehydratase activity role is filled by D1504. Positions 1600–1639 (KKGQPQRQTQDKPRNTPSQTKDSTPKPAQNKPAAKVEPPK) are disordered. The Carrier 1 domain maps to 1637-1712 (PPKFSTAIRI…DLRAFLGADE (76 aa)). S1671 is subject to O-(pantetheine 4'-phosphoryl)serine. Positions 1716-1735 (ESSSSAASDSGRDTTTTGSA) are disordered. Residues 1748–1823 (EVEFERALEI…DLKTMLAREM (76 aa)) form the Carrier 2 domain. At S1782 the chain carries O-(pantetheine 4'-phosphoryl)serine. The tract at residues 1897–2145 (VTGASGGLGS…NWTPVNDIAD (249 aa)) is reductase (R) domain.

It functions in the pathway polyketide biosynthesis. Its function is as follows. Non-reducing polyketide synthase; part of the gene cluster that mediates the biosynthesis of fusarubins, highly pigmented naphthoquinones responsible for the coloration of the fruiting bodies. The non-reducing polyketide synthase FSR1 is responsible for the condensation of seven acetyl-CoA units to yield a haptaketide. After rings A and B are formed by aldol-type cyclization, the PKS-derived product is released as 6-O-demethylfusarubinaldehyde. Then, two hydroxyl groups at C-5 and C-10 are incorporated by FSR3, and simultaneously hydroxyl groups at C-6 and C-8 are methylated by FSR2. The aldehyde is, on the one hand, reduced by FSR3 to 8-O-methylfusarubin alcohol, which equilibrates mainly with 8-O-methylfusarubin and only small amounts of 8-O-methylnectriafurone. On the other hand, the aldehyde can be oxidized to form 8-O-methylfusarubinic acid, a reaction driven by FSR3 equilibrating with 8-O-methylfusarubinlactone, finally resulting in 8-O-methylanhydrofusarubinlactol after a further reduction step and loss of water. 8-O-Methylfusarubinic acid can also undergo decarboxylation, resulting in 8-O-methyl-13-hydroxynorjavanicin after another hydroxylation step at C-13. Both steps are most likely also accomplished by FSR3. No enzymatic function has been determined so far for either FSR4 and FSR5. Their deletion does not alter the product spectrum, but the possibility that they catalyze specific enzymatic steps during perithecium development cannot be ruled out. FSR4 might possess a regulatory function in the biosynthesis of fusarubins. This Gibberella fujikuroi (strain CBS 195.34 / IMI 58289 / NRRL A-6831) (Bakanae and foot rot disease fungus) protein is Non-reducing polyketide synthase fsr1.